A 310-amino-acid polypeptide reads, in one-letter code: MTDTPNQLPPWRGSVSLDFELAADGTTQWQGGARSPLKLLRHFTAGDGRCVMPLLHTAGGLVGGDQLEIALHAAAGSRSFLTSVAAQKIYGSRGRSRVQPQGRWAQITLQAELEAGADLEWLPQETVVFAGALLEQQQQITVAPGASWLGADVVRLGRTARGEDLGAGRFCNSLSIRRGEQWSVVERLSLEQEQLPNPHGMGGEPVLGTLIWIAPEPLENEQLAQLLKGGRADREGLSGTMAIGPLEPGLIARYRGGSSQAARLWFFRLWRRIRAVQGLSEPSWPRTWPFQEAELALNPEPATTATTAAR.

It belongs to the UreD family. In terms of assembly, ureD, UreF and UreG form a complex that acts as a GTP-hydrolysis-dependent molecular chaperone, activating the urease apoprotein by helping to assemble the nickel containing metallocenter of UreC. The UreE protein probably delivers the nickel.

Its subcellular location is the cytoplasm. In terms of biological role, required for maturation of urease via the functional incorporation of the urease nickel metallocenter. The chain is Urease accessory protein UreD from Synechococcus sp. (strain RCC307).